The chain runs to 212 residues: 3-isopropylmalate dehydratase small subunit (212 aa).

The protein belongs to the LeuD family. LeuD type 1 subfamily. Heterodimer of LeuC and LeuD.

The catalysed reaction is (2R,3S)-3-isopropylmalate = (2S)-2-isopropylmalate. It participates in amino-acid biosynthesis; L-leucine biosynthesis; L-leucine from 3-methyl-2-oxobutanoate: step 2/4. Its function is as follows. Catalyzes the isomerization between 2-isopropylmalate and 3-isopropylmalate, via the formation of 2-isopropylmaleate. This Thioalkalivibrio sulfidiphilus (strain HL-EbGR7) protein is 3-isopropylmalate dehydratase small subunit.